Reading from the N-terminus, the 235-residue chain is Probable transcriptional regulatory protein Cj1172c (235 aa).

This sequence belongs to the TACO1 family.

The protein localises to the cytoplasm. The chain is Probable transcriptional regulatory protein Cj1172c from Campylobacter jejuni subsp. jejuni serotype O:2 (strain ATCC 700819 / NCTC 11168).